The following is a 63-amino-acid chain: Hyphancin-3F (63 aa).

The signal sequence occupies residues M1–A22. Residues A23 to P26 constitute a propeptide, removed by a dipeptidylpeptidase. L61 carries the leucine amide modification.

It belongs to the cecropin family.

It is found in the secreted. Functionally, has antibacterial activity. This is Hyphancin-3F from Hyphantria cunea (Fall webworm moth).